The sequence spans 1071 residues: Exportin-1 (1071 aa).

One can recognise an Importin N-terminal domain in the interval 46-112; that stretch reads AQEVLTHLKE…KKYVVGLIIK (67 aa). HEAT repeat units follow at residues 217-240, 241-277, 354-472, 515-553, 560-597, and 602-639; these read QNAPLVHATLETLLRFLNWIPLGY, IFETKLISTLIYKFLNVPMFRNVSLKCLTEIAGVSVS, MLLV…YVDT, RFLVTVIKDLLGLCEQKRGKDNKAIIASNIMYIVGQYPR, KFLKTVVNKLFEFMHETHDGVQDMACDTFIKIAQKCRR, and VQVGEVMPFIDEILNNINTIICDLQPQQVHTFYEAVGY. A necessary for interaction with Ran and nuclear export complex formation region spans residues 327–450; that stretch reads CTFLKEHGQL…VREFMKDTDS (124 aa). Residue Ser391 is modified to Phosphoserine. Residues 411–481 are necessary for interaction with RANBP3; sequence TVLSKVRLLM…TEIIMTKKLQ (71 aa). Position 446 is an N6-acetyllysine (Lys446). Thr448 is modified (phosphothreonine). Ser450 bears the Phosphoserine mark. At Tyr454 the chain carries Phosphotyrosine. Residue Lys693 is modified to N6-acetyllysine. HEAT repeat units lie at residues 775–813, 885–916, and 917–954; these read NFVPPLLDAVLIDYQRNVPAAREPEVLSTMAIIVNKLGG, TMRNVADTGLQILFTLLQNVAQEEAAAQSFYQ, and TYFCDILQHIFSVVTDTSHTAGLTMHASILAYMFNLVE. Phosphoserine is present on residues Ser966 and Ser1031. One copy of the HEAT 10 repeat lies at 1002-1039; it reads FSLNQDIPAFKEHLRDFLVQIKEFAGEDTSDLFLEERE.

It belongs to the exportin family. As to quaternary structure, found in a U snRNA export complex with PHAX/RNUXA, NCBP1/CBP80, NCBP2/CBP20, RAN, XPO1 and m7G-capped RNA. Component of a nuclear export receptor complex composed of KPNB1, RAN, SNUPN and XPO1. Found in a trimeric export complex with SNUPN, RAN and XPO1. Found in a nuclear export complex with RANBP3 and RAN. Found in a 60S ribosomal subunit export complex with NMD3, RAN, XPO1. Interacts with DDX3X, NMD3, NUP42, NUP88, NUP214, RANBP3 and TERT. Interacts with NEMF (via its N-terminus). Interacts with the monomeric form of BIRC5/survivin deacetylated at 'Lys-129'. Interacts with DTNBP1 and SERTAD2; the interactions translocate DTNBP1 and SERTAD2 out of the nucleus. Interacts with ATF2. Interacts with SLC35G1 and STIM1. Interacts with DCAF8. Interacts with CPEB3. Interacts with HAX1. Interacts with BOK; translocates to the cytoplasm. Interacts with HSP90AB1. Interacts with LRPPRC; interacts with LRPPRC alone and also when LRPPRC is in complex with EIF4E and with EIF4E sensitivity element (4ESE)-containing mRNAs to form an EIF4E-dependent mRNA export complex.

The protein resides in the cytoplasm. Its subcellular location is the nucleus. It is found in the nucleoplasm. The protein localises to the cajal body. It localises to the nucleolus. Its function is as follows. Mediates the nuclear export of cellular proteins (cargos) bearing a leucine-rich nuclear export signal (NES) and of RNAs. In the nucleus, in association with RANBP3, binds cooperatively to the NES on its target protein and to the GTPase Ran in its active GTP-bound form. Docking of this complex to the nuclear pore complex (NPC) is mediated through binding to nucleoporins. Upon transit of a nuclear export complex into the cytoplasm, disassembling of the complex and hydrolysis of Ran-GTP to Ran-GDP (induced by RANBP1 and RANGAP1, respectively) cause release of the cargo from the export receptor. The directionality of nuclear export is thought to be conferred by an asymmetric distribution of the GTP- and GDP-bound forms of Ran between the cytoplasm and nucleus. Involved in U3 snoRNA transport from Cajal bodies to nucleoli. Binds to late precursor U3 snoRNA bearing a TMG cap. This is Exportin-1 (Xpo1) from Rattus norvegicus (Rat).